The sequence spans 126 residues: Glycine cleavage system H protein (126 aa).

Positions 21–103 (TATIGISEHA…YEGGWIVKVK (83 aa)) constitute a Lipoyl-binding domain. K62 carries the N6-lipoyllysine modification.

It belongs to the GcvH family. As to quaternary structure, the glycine cleavage system is composed of four proteins: P, T, L and H. It depends on (R)-lipoate as a cofactor.

Functionally, the glycine cleavage system catalyzes the degradation of glycine. The H protein shuttles the methylamine group of glycine from the P protein to the T protein. In Vibrio campbellii (strain ATCC BAA-1116), this protein is Glycine cleavage system H protein.